Here is a 223-residue protein sequence, read N- to C-terminus: MOB kinase activator-like 4 (223 aa).

The disordered stretch occupies residues 1–21; it reads MKMADGSTILRRNRPGTKSKD. 4 residues coordinate Zn(2+): C92, C97, H169, and H174.

It belongs to the MOB1/phocein family.

The protein is MOB kinase activator-like 4 (Mob4) of Drosophila melanogaster (Fruit fly).